The sequence spans 843 residues: Protein piwi (843 aa).

Residues 1 to 12 (MADDQGRGRRRP) carry the Nuclear localization signal motif. The segment at 1–76 (MADDQGRGRR…TERKPWGDQY (76 aa)) is disordered. The interval 1 to 257 (MADDQGRGRR…ILLGTEITHK (257 aa)) is interaction with CBX5 and papi. A symmetric dimethylarginine mark is found at arginine 7, arginine 9, arginine 10, and arginine 11. The segment covering 41 to 72 (PRADPRIEASRERRALEEAPRREGGPTERKPW) has biased composition (basic and acidic residues). The PAZ domain occupies 263 to 372 (TIYDIMRRCS…LIPELCRVTG (110 aa)). The 292-residue stretch at 538 to 829 (LILCLVPNDN…LATLVGTNLH (292 aa)) folds into the Piwi domain. A Mg(2+)-binding site is contributed by glutamine 589. Catalysis depends on residues aspartate 614 and aspartate 685. Leucine 843 serves as a coordination point for Mg(2+).

The protein belongs to the argonaute family. Piwi subfamily. As to quaternary structure, in the ovaries, part of a complex composed of at least Panx, nxf2, piwi and Nxt1. The complex is knowns as Panx-induced co-transcriptional silencing (PICTS) complex, Panx-nxf2-dependent TAP/p15 silencing (Pandas complex), SFiNX (silencing factor interacting nuclear export variant) or piwi-Panx-nxf2-p15 (PPNP) complex. Interacts with vas; this interaction is RNA-independent. Interacts with Dcr-1 and Fmr1; these interactions occur in polar granules. Interacts (via N-terminal region) with CBX5 (via chromoshadow domain). Forms a complex with Hsp83 and Hop; probably Hop mediates the interaction between piwi and Hsp83. Forms a complex with Yb body components armi and fs(1)Yb; this interaction is required for proper piRNA loading and nuclear localization of piwi. Interaction of Piwi and fs(1)Yb is likely to occur via armi. Interacts (via the N-terminal region when unmethylated or symmetrically methylated at Arg-10) with papi (via Tudor domain). Interacts with vret. Interacts with Panx. Interacts with arx. Interacts with Tudor-SN. Interacts with Nup358 (via N-terminus). Associates with the nuclear pore complex via interaction with Elys. Interacts with thoc5; the interaction might be partly RNA-mediated. Interacts with xmas-2. Symmetrically dimethylated, most likely by csul. Methylation at Arg-10 enhances binding to papi whereas methylation at Arg-7, Arg-9 or Arg-11 reduces binding affinity to papi. In terms of processing, phosphorylated on serine and tyrosine residues in an Hsp83-dependent manner. As to expression, expressed in ovaries (at protein level). Expressed somatically in ovariole terminal filament cells, epithelial sheath cells, cap cells and follicle cells (at protein level). Expressed in nurse cells and oocytes in developing egg chambers (at protein level). In embryos, accumulates in pole cells (at protein level). In larval and adult testis, expressed in a germinal proliferative center at the apical tip containing somatic hub cells and mitotically dividing germ stem cells (at protein level).

It is found in the cytoplasm. The protein localises to the nucleus. The protein resides in the nucleoplasm. It localises to the chromosome. Acts via the piwi-interacting RNA (piRNA) metabolic process, which mediates the repression of transposable elements during meiosis by forming complexes composed of piRNAs and Piwi proteins and governs the methylation and subsequent repression of transposons. Directly binds piRNAs, a class of 24 to 30 nucleotide RNAs that are generated by a Dicer-independent mechanism and are primarily derived from transposons and other repeated sequence elements. In ovarian somatic cells, mediates silencing of transposable elements at the transcriptional level in a mael-dependent manner. Involved in silencing of long terminal repeat (LTR) retrotransposons in male germline. In testis, regulates spermatogenesis together with Tudor-SN. In germ cells, mediates silencing at both transcriptional and post-transcriptional levels and is involved in the maintenance of populations of primary and secondary piRNAs. Piwi-mediated transcriptional silencing is accompanied by the formation of His3 trimethylated on 'Lys-10' (H3K9me3) associated euchromatin and heterochromatin. In ovary, associates predominantly with antisense piRNAs that contain uridine at their 5' end. Association with sense piRNAs is also observed but to a lesser extent. Mediates a somatic signaling mechanism required for the maintenance of germline stem cells to produce and maintain a daughter germline stem cell. It is not essential for the further differentiation of the committed daughter cell. Acts cell autonomously to promote germline stem cell division. Its role in stem cell maintenance does not seem to require nuclear localization. Required maternally for the posterior localization of osk and vas and for pole cell formation during oogenesis and early embryogenesis. Together with Hop and Hsp83, mediates canalization, also known as developmental robustness, likely via epigenetic silencing of existing genetic variants and suppression of transposon-induced new genetic variation. Shows RNA cleavage activity, although is not required for any of its known functions. In the ovaries, forms a complex with nxf2, Panx and Nxt1 which acts as effectors of cotranscriptional transposon silencing. This Drosophila melanogaster (Fruit fly) protein is Protein piwi.